The primary structure comprises 328 residues: MAAGIVASRRLRDLLTRRLTASNYPGLSISLRLTGSPAQEEASGVALGEAPDHSYESLRVTSAQKHVLHVQLNRPNKRNAMNKVFWREMVECFNKISRDADCRAVVISGAGKMFTAGVDLMDMASDILQPKGDDVARISWYLRDIITRYQETFNVIEKCPKPVIAAVHGGCIGGGVDLVTACDIRYCAQDAFFQVKEVDVGLAADVGTLQRLPKVIGNQSLVNELAFTARKMMADEALGSGLVSRVFPDKEVMLDAALALAAEISSKSPVAVQSTKVNLLYSRDHSVAESLNYVASWNMSMLQTQDLMKSVQAATENKELKSVTFSKL.

Residues Met-1–Gly-26 constitute a mitochondrion transit peptide. Substrate is bound by residues Ala-116–Leu-120 and Gly-174. Position 231 is an N6-succinyllysine (Lys-231). The residue at position 268 (Ser-268) is a Phosphoserine. Positions Ser-326 to Leu-328 match the Microbody targeting signal motif. The residue at position 327 (Lys-327) is an N6-acetyllysine.

The protein belongs to the enoyl-CoA hydratase/isomerase family. As to quaternary structure, homohexamer.

It is found in the mitochondrion. The protein resides in the peroxisome. It carries out the reaction (3E,5Z)-octadienoyl-CoA = (2E,4E)-octadienoyl-CoA. It catalyses the reaction (3E,5Z,8Z,11Z,14Z)-eicosapentaenoyl-CoA = (2E,4E,8Z,11Z,14Z)-eicosapentaenoyl-CoA. It functions in the pathway lipid metabolism; fatty acid beta-oxidation. In terms of biological role, isomerization of 3-trans,5-cis-dienoyl-CoA to 2-trans,4-trans-dienoyl-CoA. The sequence is that of Delta(3,5)-Delta(2,4)-dienoyl-CoA isomerase, mitochondrial (ECH1) from Pongo abelii (Sumatran orangutan).